The following is a 226-amino-acid chain: Uracil-DNA glycosylase (226 aa).

Aspartate 64 functions as the Proton acceptor in the catalytic mechanism.

It belongs to the uracil-DNA glycosylase (UDG) superfamily. UNG family.

The protein resides in the cytoplasm. It catalyses the reaction Hydrolyzes single-stranded DNA or mismatched double-stranded DNA and polynucleotides, releasing free uracil.. Functionally, excises uracil residues from the DNA which can arise as a result of misincorporation of dUMP residues by DNA polymerase or due to deamination of cytosine. In Proteus mirabilis (strain HI4320), this protein is Uracil-DNA glycosylase.